A 250-amino-acid chain; its full sequence is Glycerol uptake facilitator protein-like 5 (250 aa).

The next 2 helical transmembrane spans lie at 12–32 (EFFG…NAFL) and 46–66 (GGWL…AMMF). The NPA 1 motif lies at 75–77 (NPA). A run of 3 helical transmembrane segments spans residues 85 to 105 (IGIF…LGAI), 142 to 162 (LNGF…AMGL), and 172 to 192 (IDIA…SLGG). Residues 199-201 (NPA) carry the NPA 2 motif. A helical membrane pass occupies residues 230–250 (VVAPIVGAVIGIWIYKIFFGL).

This sequence belongs to the MIP/aquaporin (TC 1.A.8) family.

It localises to the cell membrane. In terms of biological role, probable transporter that facilitates the transmembrane diffusion of an unknown substrate. Is not permeable to water, dihydroxyacetone, glycerol, urea, H(2)O(2) and D/L-lactic acid. This Lactiplantibacillus plantarum (strain ATCC BAA-793 / NCIMB 8826 / WCFS1) (Lactobacillus plantarum) protein is Glycerol uptake facilitator protein-like 5.